Here is a 193-residue protein sequence, read N- to C-terminus: Potassium-transporting ATPase KdpC subunit (193 aa).

A helical membrane pass occupies residues 14–34 (ITFTFLVLCGLVYPLIVTGIA).

It belongs to the KdpC family. The system is composed of three essential subunits: KdpA, KdpB and KdpC.

Its subcellular location is the cell membrane. In terms of biological role, part of the high-affinity ATP-driven potassium transport (or Kdp) system, which catalyzes the hydrolysis of ATP coupled with the electrogenic transport of potassium into the cytoplasm. This subunit acts as a catalytic chaperone that increases the ATP-binding affinity of the ATP-hydrolyzing subunit KdpB by the formation of a transient KdpB/KdpC/ATP ternary complex. In Bacillus cereus (strain G9842), this protein is Potassium-transporting ATPase KdpC subunit.